We begin with the raw amino-acid sequence, 130 residues long: Small ribosomal subunit protein uS8 (130 aa).

The protein belongs to the universal ribosomal protein uS8 family. Part of the 30S ribosomal subunit.

One of the primary rRNA binding proteins, it binds directly to 16S rRNA central domain where it helps coordinate assembly of the platform of the 30S subunit. This is Small ribosomal subunit protein uS8 from Pyrococcus abyssi (strain GE5 / Orsay).